Consider the following 790-residue polypeptide: Probable phosphoketolase (790 aa).

The protein belongs to the XFP family. Thiamine diphosphate serves as cofactor.

In Nitrosomonas europaea (strain ATCC 19718 / CIP 103999 / KCTC 2705 / NBRC 14298), this protein is Probable phosphoketolase.